The following is a 300-amino-acid chain: Auxin-responsive protein IAA7 (300 aa).

2 disordered regions span residues Met-1 to Lys-80 and Val-92 to Asn-125. The short motif at Leu-43 to Leu-47 is the EAR-like (transcriptional repression) element. The span at Val-92–Lys-103 shows a compositional bias: polar residues. The region spanning Ala-177 to Thr-281 is the PB1 domain.

The protein belongs to the Aux/IAA family. Homodimers and heterodimers. Expressed at low levels in roots and shoots.

Its subcellular location is the nucleus. Aux/IAA proteins are short-lived transcriptional factors that function as repressors of early auxin response genes at low auxin concentrations. The protein is Auxin-responsive protein IAA7 (IAA7) of Oryza sativa subsp. japonica (Rice).